The following is an 88-amino-acid chain: Small ribosomal subunit protein bS20 (88 aa).

The segment at 1 to 27 (MANSKSAKKRALQSEKRRQHNASRRSM) is disordered.

The protein belongs to the bacterial ribosomal protein bS20 family.

In terms of biological role, binds directly to 16S ribosomal RNA. In Shewanella denitrificans (strain OS217 / ATCC BAA-1090 / DSM 15013), this protein is Small ribosomal subunit protein bS20.